Here is a 304-residue protein sequence, read N- to C-terminus: Phosphatidylinositol mannoside acyltransferase (304 aa).

H126 functions as the Proton acceptor in the catalytic mechanism. Hexadecanoyl-CoA-binding residues include H126 and R164. The active site involves E200. Hexadecanoyl-CoA contacts are provided by S206 and E229.

Belongs to the LpxL/LpxM/LpxP family. As to quaternary structure, monomer.

It localises to the cell inner membrane. It catalyses the reaction a 2,6-O-bis(alpha-D-mannopyranosyl)-1-phosphatidyl-1D-myo-inositol + an acyl-CoA = a 2-O-(alpha-D-mannosyl)-6-O-(6-O-acyl-alpha-D-mannosyl)-1-phosphatidyl-1D-myo-inositol + CoA. It carries out the reaction a 1,2-diacyl-sn-glycero-3-phospho-[alpha-D-mannopyranosyl-(1&lt;-&gt;6)-D-myo-inositol] + an acyl-CoA = a 1,2-diacyl-sn-glycero-3-phospho-[alpha-D-6-acyl-mannopyranosyl-(1&lt;-&gt;6)-D-myo-inositol] + CoA. It functions in the pathway phospholipid metabolism; phosphatidylinositol metabolism. Catalyzes the transfer of a palmitoyl moiety from palmitoyl-CoA to the 6-position of the mannose ring linked to the 2-position of myo-inositol in phosphatidyl-myo-inositol monomannoside (PIM1) or dimannoside (PIM2). The chain is Phosphatidylinositol mannoside acyltransferase from Mycolicibacterium smegmatis (strain ATCC 700084 / mc(2)155) (Mycobacterium smegmatis).